A 127-amino-acid chain; its full sequence is MRFLLVAVVAMMALVSSSTAAVAETSNDINTMNNNQEFARSLRNTEERSIAAILAEAGEEDRAAWRINYRAWYKAKLTPTQVKTVLGVSQAEMNNVAKQLQRLYLGYYSFYTAMEKKKEEKKRLATP.

The first 20 residues, 1–20, serve as a signal peptide directing secretion; sequence MRFLLVAVVAMMALVSSSTA. Positions 40 to 62 match the RxLR-dEER motif; that stretch reads RSLRNTEERSIAAILAEAGEEDR. Positions 72–107 are WY-domain; sequence WYKAKLTPTQVKTVLGVSQAEMNNVAKQLQRLYLGY.

The protein belongs to the RxLR effector family. In terms of assembly, forms an unusual trans-homodimer. Interacts with host UBK.

The protein localises to the secreted. Its subcellular location is the host nucleus. The protein resides in the host nucleolus. Effector that suppresses flg22-induced post-translational MAP kinase activation in potato and tomato, but not in Arabidopsis. The perception of highly conserved pathogen- or microbe-associated molecular patterns (PAMPs/MAMPs), such as flg22, triggers converging signaling pathways recruiting MAP kinase cascades and inducing transcriptional re-programming, yielding a generic antimicrobial response. Does not suppress programmed cell death triggered by the P.infestans elicitin infestin-1 (INF1), or by co-expression of tomato Cf4 with Cladosporium fulvum Avr4. Suppresses early pattern-triggered immunity (PTI) via interaction with the U-box-kinase protein UBK, a positive regulator of specific PTI pathways in both potato and Nicotiana benthamiana. The sequence is that of RxLR effector protein SFI3 from Phytophthora infestans (strain T30-4) (Potato late blight agent).